A 246-amino-acid chain; its full sequence is Ribonuclease 3 (246 aa).

An RNase III domain is found at 18 to 147; it reads FKELQKKIGI…FIGALYLDQG (130 aa). Residue E60 participates in Mg(2+) binding. Residue D64 is part of the active site. Positions 133 and 136 each coordinate Mg(2+). Residue E136 is part of the active site. A DRBM domain is found at 173–242; the sequence is DFKSQLQELV…AQMALQKLKT (70 aa).

The protein belongs to the ribonuclease III family. Homodimer. Mg(2+) serves as cofactor.

It localises to the cytoplasm. It catalyses the reaction Endonucleolytic cleavage to 5'-phosphomonoester.. Its function is as follows. Digests double-stranded RNA. Involved in the processing of primary rRNA transcript to yield the immediate precursors to the large and small rRNAs (23S and 16S). Processes some mRNAs, and tRNAs when they are encoded in the rRNA operon. Processes pre-crRNA and tracrRNA of type II CRISPR loci if present in the organism. The polypeptide is Ribonuclease 3 (Geobacillus sp. (strain WCH70)).